Reading from the N-terminus, the 396-residue chain is Tryptophan synthase beta chain (396 aa).

N6-(pyridoxal phosphate)lysine is present on lysine 88.

Belongs to the TrpB family. Tetramer of two alpha and two beta chains. Pyridoxal 5'-phosphate serves as cofactor.

It carries out the reaction (1S,2R)-1-C-(indol-3-yl)glycerol 3-phosphate + L-serine = D-glyceraldehyde 3-phosphate + L-tryptophan + H2O. It functions in the pathway amino-acid biosynthesis; L-tryptophan biosynthesis; L-tryptophan from chorismate: step 5/5. The beta subunit is responsible for the synthesis of L-tryptophan from indole and L-serine. The polypeptide is Tryptophan synthase beta chain (Shewanella sp. (strain W3-18-1)).